Consider the following 247-residue polypeptide: Large ribosomal subunit protein uL30z (247 aa).

This sequence belongs to the universal ribosomal protein uL30 family.

The protein is Large ribosomal subunit protein uL30z (RPL7A) of Arabidopsis thaliana (Mouse-ear cress).